The primary structure comprises 376 residues: Alanine racemase 1 (376 aa).

The Proton acceptor; specific for D-alanine role is filled by Lys40. Lys40 carries the post-translational modification N6-(pyridoxal phosphate)lysine. Arg138 is a substrate binding site. Tyr268 (proton acceptor; specific for L-alanine) is an active-site residue. Met316 provides a ligand contact to substrate.

Belongs to the alanine racemase family. It depends on pyridoxal 5'-phosphate as a cofactor.

The catalysed reaction is L-alanine = D-alanine. It participates in amino-acid biosynthesis; D-alanine biosynthesis; D-alanine from L-alanine: step 1/1. Functionally, catalyzes the interconversion of L-alanine and D-alanine. May also act on other amino acids. The polypeptide is Alanine racemase 1 (alr1) (Oceanobacillus iheyensis (strain DSM 14371 / CIP 107618 / JCM 11309 / KCTC 3954 / HTE831)).